A 204-amino-acid polypeptide reads, in one-letter code: Large ribosomal subunit protein eL15 (204 aa).

This sequence belongs to the eukaryotic ribosomal protein eL15 family. Component of the large ribosomal subunit.

Its subcellular location is the cytoplasm. Its function is as follows. Component of the large ribosomal subunit. The ribosome is a large ribonucleoprotein complex responsible for the synthesis of proteins in the cell. In Hypophthalmichthys molitrix (Silver carp), this protein is Large ribosomal subunit protein eL15 (rpl15).